A 1354-amino-acid polypeptide reads, in one-letter code: Tensin homolog (1354 aa).

One can recognise a Phosphatase tensin-type domain in the interval 38 to 207 (MKDRKEGVQV…GYFSSLLSGR (170 aa)). The active-site Phosphocysteine intermediate is cysteine 144. Residues 212–337 (SDPLYLHNII…VTVELVVSHT (126 aa)) enclose the C2 tensin-type domain. 7 disordered regions span residues 380–442 (EYSE…DVVP), 597–616 (STLQRRPKPPARSGSYRTLN), 638–660 (SNTAPLPPPRRQEQHAGTRSVQL), 692–720 (DVRGGQQQQQEQHNASNDFNFSNTLNNTP), 734–754 (SVTTPRNHHFSTPSREQEADA), 794–879 (AANN…DRQR), and 1015–1035 (NGERGGSGHAAGGGGGGHNGY). Polar residues predominate over residues 391 to 401 (SSKSANPINNN). Over residues 408–417 (VGPPVPPKPS) the composition is skewed to pro residues. Composition is skewed to polar residues over residues 704-720 (HNASNDFNFSNTLNNTP), 734-747 (SVTTPRNHHFSTPS), and 794-804 (AANNDENQHNL). Residues 821–843 (AEFRREEERLRNTRSPYGEERWR) are compositionally biased toward basic and acidic residues. Over residues 1017-1033 (ERGGSGHAAGGGGGGHN) the composition is skewed to gly residues. An SH2 domain is found at 1083 to 1187 (WYKPTISREQ…ALPTKLVLPD (105 aa)). Residues 1209-1353 (ACNVVYVGSV…NKVMLAQKNR (145 aa)) enclose the PTB domain.

It belongs to the PTEN phosphatase protein family. As to quaternary structure, may interact (via SH2 domain) with receptor svh-2 (when tyrosine-phosphorylated). May interact (via C-terminus) with integrin pat-3. In terms of tissue distribution, expressed in ventral motor neurons, including ventral and dorsal D-type neurons, and in a subset of cells in the head.

The protein resides in the cell projection. The protein localises to the axon. It catalyses the reaction O-phospho-L-tyrosyl-[protein] + H2O = L-tyrosyl-[protein] + phosphate. Its function is as follows. Probable phosphatase which regulates axon regeneration after injury by linking the svh-2 and integrin signaling pathways. Not involved in axon regeneration after injury. In Caenorhabditis elegans, this protein is Tensin homolog.